The chain runs to 507 residues: Tabersonine/lochnericine 19-hydroxylase (507 aa).

The helical transmembrane segment at 8-28 (FFVLLLPFFIGIAFIYKLWNF) threads the bilayer. An N-linked (GlcNAc...) asparagine glycan is attached at Asn-167. Cys-447 lines the heme pocket.

The protein belongs to the cytochrome P450 family. The cofactor is heme. As to expression, confined to roots.

It is found in the endoplasmic reticulum membrane. It catalyses the reaction (-)-tabersonine + reduced [NADPH--hemoprotein reductase] + O2 = (-)-(R)-19-hydroxytabersonine + oxidized [NADPH--hemoprotein reductase] + H2O + H(+). It carries out the reaction lochnericine + reduced [NADPH--hemoprotein reductase] + O2 = horhammericine + oxidized [NADPH--hemoprotein reductase] + H2O + H(+). The enzyme catalyses (-)-vincadifformine + reduced [NADPH--hemoprotein reductase] + O2 = (-)-minovincinine + oxidized [NADPH--hemoprotein reductase] + H2O + H(+). It functions in the pathway alkaloid biosynthesis. Component of the monoterpenoid indole alkaloids (MIAs, e.g. echitovenine, tabersonine, lochnericine, 19-hydroxytabersonine and horhammericine) biosynthetic pathway; MIAs are used in cancer treatment and other medical applications. Cytochrome P450 catalyzing the conversion of (-)-tabersonine to 19-hydroxytabersonine, of lochnericine to horhammericine and of (-)-vincadifformine to (-)-minovincinine. In Catharanthus roseus (Madagascar periwinkle), this protein is Tabersonine/lochnericine 19-hydroxylase.